Reading from the N-terminus, the 315-residue chain is Protein FRA10AC1 (315 aa).

Met-1 is subject to N-acetylmethionine. The disordered stretch occupies residues 1-28 (MHGHGGYDSDFSDDERCGESSKRKKRTV). Phosphoserine occurs at positions 9 and 12. Lys-36 bears the N6-acetyllysine mark. Basic residues predominate over residues 226 to 235 (EIKSKKRKDK). The tract at residues 226–315 (EIKSKKRKDK…FDEYFQDLFL (90 aa)) is disordered. Residues 236–245 (TKKDCEESSH) show a composition bias toward basic and acidic residues. Phosphoserine is present on residues Ser-251, Ser-252, Ser-278, Ser-283, and Ser-285. Residues 268-278 (KKSEDSLLRNS) show a composition bias toward basic and acidic residues. The span at 301–315 (SQEEEFDEYFQDLFL) shows a compositional bias: acidic residues.

As to quaternary structure, interacts with ESS2. As to expression, ubiquitously expressed with higher expression in brain, heart, skeletal muscle, kidney and liver.

The protein resides in the nucleus. Functionally, may be involved in pre-mRNA splicing. In Homo sapiens (Human), this protein is Protein FRA10AC1 (FRA10AC1).